The primary structure comprises 39 residues: Bomanin Short 3 (39 aa).

Positions methionine 1–alanine 18 are cleaved as a signal peptide. Positions threonine 19–proline 23 are excised as a propeptide. Residues cysteine 32 and cysteine 35 are joined by a disulfide bond.

Belongs to the bomanin family. As to expression, hemolymph (at protein level).

Its subcellular location is the secreted. Functionally, secreted immune-induced peptide induced by Toll signaling. Has a role in resistance bacterial and fungal infections. The strength of antimicrobial activity appears to correlate with the overall level of expression. Has no activity against the fungus C.glabrata in vitro. The chain is Bomanin Short 3 from Drosophila melanogaster (Fruit fly).